Here is a 249-residue protein sequence, read N- to C-terminus: 5'-nucleotidase SurE (249 aa).

4 residues coordinate a divalent metal cation: D8, D9, S39, and N91.

Belongs to the SurE nucleotidase family. A divalent metal cation serves as cofactor.

It is found in the cytoplasm. It carries out the reaction a ribonucleoside 5'-phosphate + H2O = a ribonucleoside + phosphate. Its function is as follows. Nucleotidase that shows phosphatase activity on nucleoside 5'-monophosphates. This Haemophilus influenzae (strain 86-028NP) protein is 5'-nucleotidase SurE.